The following is a 1208-amino-acid chain: DNA-directed RNA polymerase subunit beta (1208 aa).

It belongs to the RNA polymerase beta chain family. In terms of assembly, the RNAP catalytic core consists of 2 alpha, 1 beta, 1 beta' and 1 omega subunit. When a sigma factor is associated with the core the holoenzyme is formed, which can initiate transcription.

The enzyme catalyses RNA(n) + a ribonucleoside 5'-triphosphate = RNA(n+1) + diphosphate. DNA-dependent RNA polymerase catalyzes the transcription of DNA into RNA using the four ribonucleoside triphosphates as substrates. The chain is DNA-directed RNA polymerase subunit beta from Enterococcus faecium (Streptococcus faecium).